A 250-amino-acid polypeptide reads, in one-letter code: Probable septum site-determining protein MinC (250 aa).

Residues S110–P143 form a disordered region. Positions A112–E128 are enriched in basic and acidic residues. A compositionally biased stretch (pro residues) spans P129–E138.

The protein belongs to the MinC family. Interacts with MinD and FtsZ.

In terms of biological role, cell division inhibitor that blocks the formation of polar Z ring septums. Rapidly oscillates between the poles of the cell to destabilize FtsZ filaments that have formed before they mature into polar Z rings. Prevents FtsZ polymerization. This Pseudomonas putida (strain ATCC 47054 / DSM 6125 / CFBP 8728 / NCIMB 11950 / KT2440) protein is Probable septum site-determining protein MinC.